The sequence spans 203 residues: Large ribosomal subunit protein bL25 (203 aa).

It belongs to the bacterial ribosomal protein bL25 family. CTC subfamily. As to quaternary structure, part of the 50S ribosomal subunit; part of the 5S rRNA/L5/L18/L25 subcomplex. Contacts the 5S rRNA. Binds to the 5S rRNA independently of L5 and L18.

Its function is as follows. This is one of the proteins that binds to the 5S RNA in the ribosome where it forms part of the central protuberance. This is Large ribosomal subunit protein bL25 from Psychromonas ingrahamii (strain DSM 17664 / CCUG 51855 / 37).